The sequence spans 526 residues: Peptide chain release factor 3 (526 aa).

Residues 8 to 277 form the tr-type G domain; sequence NKRRTFAIIS…GLTEWAPKPQ (270 aa). Residues 17 to 24, 85 to 89, and 139 to 142 contribute to the GTP site; these read SHPDAGKT, DTPGH, and NKLD.

The protein belongs to the TRAFAC class translation factor GTPase superfamily. Classic translation factor GTPase family. PrfC subfamily.

It localises to the cytoplasm. In terms of biological role, increases the formation of ribosomal termination complexes and stimulates activities of RF-1 and RF-2. It binds guanine nucleotides and has strong preference for UGA stop codons. It may interact directly with the ribosome. The stimulation of RF-1 and RF-2 is significantly reduced by GTP and GDP, but not by GMP. The polypeptide is Peptide chain release factor 3 (Actinobacillus pleuropneumoniae serotype 3 (strain JL03)).